A 215-amino-acid polypeptide reads, in one-letter code: MSKVYDWFEERLEIQAIADDITSKYVPPHVNIFYCLGGITLTCFLVQVATGFAMTFYYRPTVTEAFASVQYIMTEANFGWLIRSVHRWSASMMVLMMILHVFRVYLTGGFKKPRELTWVTGVVLAVLTASFGVTGYSLPWDQVGYWAVKIVTGVPDAIPVIGSPLVELLRGSASVGQSTLTRFYSLHTFVLPLLTAVFMLMHFPMIRKQGISGPL.

Residues 32 to 52 (IFYCLGGITLTCFLVQVATGF) traverse the membrane as a helical segment. Cys35 is a heme c binding site. Heme b-binding residues include His86 and His100. A run of 3 helical transmembrane segments spans residues 90-110 (ASMM…TGGF), 116-136 (LTWV…VTGY), and 186-206 (LHTF…FPMI). His187 and His202 together coordinate heme b.

It belongs to the cytochrome b family. PetB subfamily. The 4 large subunits of the cytochrome b6-f complex are cytochrome b6, subunit IV (17 kDa polypeptide, PetD), cytochrome f and the Rieske protein, while the 4 small subunits are PetG, PetL, PetM and PetN. The complex functions as a dimer. Heme b serves as cofactor. Heme c is required as a cofactor.

Its subcellular location is the plastid. It is found in the chloroplast thylakoid membrane. In terms of biological role, component of the cytochrome b6-f complex, which mediates electron transfer between photosystem II (PSII) and photosystem I (PSI), cyclic electron flow around PSI, and state transitions. The sequence is that of Cytochrome b6 from Nicotiana tomentosiformis (Tobacco).